The primary structure comprises 367 residues: 7,8-didemethyl-8-hydroxy-5-deazariboflavin synthase (367 aa).

The Radical SAM core domain occupies 39–275; it reads LTFARNVFVP…AEVGVQVPPN (237 aa). Residues Cys53, Cys57, and Cys60 each contribute to the [4Fe-4S] cluster site.

It belongs to the radical SAM superfamily. CofG family. As to quaternary structure, consists of two subunits, CofG and CofH. It depends on [4Fe-4S] cluster as a cofactor.

The enzyme catalyses 5-amino-5-(4-hydroxybenzyl)-6-(D-ribitylimino)-5,6-dihydrouracil + S-adenosyl-L-methionine = 7,8-didemethyl-8-hydroxy-5-deazariboflavin + 5'-deoxyadenosine + L-methionine + NH4(+) + H(+). The protein operates within cofactor biosynthesis; coenzyme F0 biosynthesis. Catalyzes the radical-mediated synthesis of 7,8-didemethyl-8-hydroxy-5-deazariboflavin from 5-amino-5-(4-hydroxybenzyl)-6-(D-ribitylimino)-5,6-dihydrouracil. The protein is 7,8-didemethyl-8-hydroxy-5-deazariboflavin synthase of Halobacterium salinarum (strain ATCC 29341 / DSM 671 / R1).